Consider the following 203-residue polypeptide: Holliday junction branch migration complex subunit RuvA (203 aa).

Positions 1 to 64 are domain I; that stretch reads MIGRLRGIII…EDAQLLYGFN (64 aa). Residues 65-142 form a domain II region; the sequence is NKQERTLFKE…KGLHGDLFTP (78 aa). The segment at 143-154 is flexible linker; the sequence is AADLVLTSPASP. The interval 155 to 203 is domain III; sequence ATNDAEQEAVAALVALGYKPQEASRMVSKIARPDASSETLIREALRAAL.

Belongs to the RuvA family. In terms of assembly, homotetramer. Forms an RuvA(8)-RuvB(12)-Holliday junction (HJ) complex. HJ DNA is sandwiched between 2 RuvA tetramers; dsDNA enters through RuvA and exits via RuvB. An RuvB hexamer assembles on each DNA strand where it exits the tetramer. Each RuvB hexamer is contacted by two RuvA subunits (via domain III) on 2 adjacent RuvB subunits; this complex drives branch migration. In the full resolvosome a probable DNA-RuvA(4)-RuvB(12)-RuvC(2) complex forms which resolves the HJ.

It localises to the cytoplasm. Its function is as follows. The RuvA-RuvB-RuvC complex processes Holliday junction (HJ) DNA during genetic recombination and DNA repair, while the RuvA-RuvB complex plays an important role in the rescue of blocked DNA replication forks via replication fork reversal (RFR). RuvA specifically binds to HJ cruciform DNA, conferring on it an open structure. The RuvB hexamer acts as an ATP-dependent pump, pulling dsDNA into and through the RuvAB complex. HJ branch migration allows RuvC to scan DNA until it finds its consensus sequence, where it cleaves and resolves the cruciform DNA. The sequence is that of Holliday junction branch migration complex subunit RuvA from Escherichia coli O9:H4 (strain HS).